Consider the following 568-residue polypeptide: PCNA-interacting partner (568 aa).

The segment at 442–555 (QIPTCVHPAP…RNNKAVSKKL (114 aa)) is disordered. A compositionally biased stretch (polar residues) spans 488 to 500 (NAWNQTGGKSTQP). Over residues 515–527 (ANRECTEQGREEN) the composition is skewed to basic and acidic residues.

Belongs to the PARI family.

It is found in the cytoplasm. The protein resides in the nucleus. Functionally, required to suppress inappropriate homologous recombination, thereby playing a central role DNA repair and in the maintenance of genomic stability. This Danio rerio (Zebrafish) protein is PCNA-interacting partner (parpbp).